The chain runs to 339 residues: Anthranilate phosphoribosyltransferase (339 aa).

Residues glycine 79, 82–83, threonine 87, 89–92, 107–115, and serine 119 contribute to the 5-phospho-alpha-D-ribose 1-diphosphate site; these read GD, NIST, and KHGNRAVSS. Glycine 79 is an anthranilate binding site. Serine 91 is a binding site for Mg(2+). Residue asparagine 110 coordinates anthranilate. Residue arginine 165 coordinates anthranilate. The Mg(2+) site is built by aspartate 224 and glutamate 225.

It belongs to the anthranilate phosphoribosyltransferase family. Homodimer. Requires Mg(2+) as cofactor.

The enzyme catalyses N-(5-phospho-beta-D-ribosyl)anthranilate + diphosphate = 5-phospho-alpha-D-ribose 1-diphosphate + anthranilate. It functions in the pathway amino-acid biosynthesis; L-tryptophan biosynthesis; L-tryptophan from chorismate: step 2/5. Its function is as follows. Catalyzes the transfer of the phosphoribosyl group of 5-phosphorylribose-1-pyrophosphate (PRPP) to anthranilate to yield N-(5'-phosphoribosyl)-anthranilate (PRA). This Geobacillus sp. (strain WCH70) protein is Anthranilate phosphoribosyltransferase.